Reading from the N-terminus, the 130-residue chain is Small ribosomal subunit protein uS9 (130 aa).

It belongs to the universal ribosomal protein uS9 family.

This is Small ribosomal subunit protein uS9 from Shewanella sediminis (strain HAW-EB3).